A 233-amino-acid chain; its full sequence is Small ribosomal subunit protein uS2 (233 aa).

It belongs to the universal ribosomal protein uS2 family.

The polypeptide is Small ribosomal subunit protein uS2 (Prochlorococcus marinus (strain MIT 9312)).